The chain runs to 156 residues: 3-hydroxyacyl-[acyl-carrier-protein] dehydratase FabZ (156 aa).

His61 is an active-site residue.

Belongs to the thioester dehydratase family. FabZ subfamily.

The protein resides in the cytoplasm. The catalysed reaction is a (3R)-hydroxyacyl-[ACP] = a (2E)-enoyl-[ACP] + H2O. Its function is as follows. Involved in unsaturated fatty acids biosynthesis. Catalyzes the dehydration of short chain beta-hydroxyacyl-ACPs and long chain saturated and unsaturated beta-hydroxyacyl-ACPs. The polypeptide is 3-hydroxyacyl-[acyl-carrier-protein] dehydratase FabZ (Acaryochloris marina (strain MBIC 11017)).